A 67-amino-acid polypeptide reads, in one-letter code: Large ribosomal subunit protein uL29 (67 aa).

Belongs to the universal ribosomal protein uL29 family.

The chain is Large ribosomal subunit protein uL29 from Rhizorhabdus wittichii (strain DSM 6014 / CCUG 31198 / JCM 15750 / NBRC 105917 / EY 4224 / RW1) (Sphingomonas wittichii).